The primary structure comprises 404 residues: MSHAIDELQAIIADLKTELETEPKSSVGVASNSRLARDRIDRMSAEVVDSNPYSRLMALQRMNIVKDYERIRDKAVAIVGVGGVGSVTADMLTRCGIGKLILFDYDKVELANMNRLFFTPDQAGLSKVAAAAATLSFINPDVEIETHNYNITTVENFDRFLDTISQGGRIAGQPVDLVLSCVDNFEARMAINAACNERNLNWFESGVSENAVSGHIQFIRPGDTACFACAPPLVVAENIDEKTLKREGVCAASLPTTMGITAGFLVQNALKYLLNFGEVSDYLGYNALSDFFPKMTLKPNPQCDDRNCIVRQKEFQARPKPVVIEEKAVSEEPLHATNEWGIELVAEDAPQSNPTPAETPVMGEGLRLAYEAPEKSSETSEETVTAATADETSLEDLMAQMKSM.

Residues Gly83, Asp104, Lys127, Asn150, and Asn184 each contribute to the ATP site. Zn(2+) is bound by residues Cys226 and Cys229. Catalysis depends on Cys250, which acts as the Glycyl thioester intermediate. Cys303 and Cys308 together coordinate Zn(2+). The segment at 372–393 (APEKSSETSEETVTAATADETS) is disordered. The span at 382–391 (ETVTAATADE) shows a compositional bias: low complexity.

This sequence belongs to the ubiquitin-activating E1 family. UBA5 subfamily.

In terms of biological role, E1-like enzyme which activates UFM1. The chain is Ubiquitin-like modifier-activating enzyme 5 from Drosophila sechellia (Fruit fly).